Here is a 375-residue protein sequence, read N- to C-terminus: Transaldolase (375 aa).

Catalysis depends on Lys145, which acts as the Schiff-base intermediate with substrate.

This sequence belongs to the transaldolase family. Type 2 subfamily.

Its subcellular location is the cytoplasm. It catalyses the reaction D-sedoheptulose 7-phosphate + D-glyceraldehyde 3-phosphate = D-erythrose 4-phosphate + beta-D-fructose 6-phosphate. The protein operates within carbohydrate degradation; pentose phosphate pathway; D-glyceraldehyde 3-phosphate and beta-D-fructose 6-phosphate from D-ribose 5-phosphate and D-xylulose 5-phosphate (non-oxidative stage): step 2/3. Transaldolase is important for the balance of metabolites in the pentose-phosphate pathway. This chain is Transaldolase, found in Mycobacterium leprae (strain Br4923).